A 515-amino-acid polypeptide reads, in one-letter code: Signal transduction histidine-protein kinase/phosphatase MprB (515 aa).

The Cytoplasmic segment spans residues 1 to 24 (MTLPPQPSRLKPPRNTSSLSLRWR). Residues 25 to 45 (VMLLAMSMVAMVVVLMSVAVY) traverse the membrane as a helical segment. Residues 46-165 (AVVSRALYDD…TGQVLGRLGT (120 aa)) lie on the Extracellular side of the membrane. The helical transmembrane segment at 166–186 (VLLIVGGVGVAVAAIAGGMVA) threads the bilayer. Residues 187–239 (RAGLRPVGRLTQAAERVARTDDLRPIPVFGSDELARLTEAFNMMLRALTESRE) form the HAMP domain. Topologically, residues 187–515 (RAGLRPVGRL…GKSRSASKEL (329 aa)) are cytoplasmic. In terms of domain architecture, Histidine kinase spans 247-467 (DAGHELRTPL…SFYVMLPGRP (221 aa)). At H250 the chain carries Phosphohistidine; by autocatalysis. A disordered region spans residues 468–515 (LTPGGNGTAPVPAAQFDPDMRSAGSRADRRVIKNTETNGKSRSASKEL).

Mg(2+) is required as a cofactor. The cofactor is Mn(2+). In terms of processing, autophosphorylated.

It is found in the cell membrane. The catalysed reaction is ATP + protein L-histidine = ADP + protein N-phospho-L-histidine.. In terms of biological role, member of the two-component regulatory system MprB/MprA which contributes to maintaining a balance among several systems involved in stress resistance and is required for establishment and maintenance of persistent infection in the host. In response to environmental signals MprB acts both as a membrane-associated protein kinase that undergoes autophosphorylation and subsequently transfers the phosphate to MprA, and a protein phosphatase that dephosphorylates phospho-MprA. This Mycobacterium sp. (strain JLS) protein is Signal transduction histidine-protein kinase/phosphatase MprB (mprB).